A 22-amino-acid polypeptide reads, in one-letter code: 2.39 kDa venom peptide (22 aa).

Post-translationally, contains 2 disulfide bonds. As to expression, expressed by the venom gland.

It localises to the secreted. Its function is as follows. Not lethal to mice by intraperitoneal or intracerebroventricular injections in doses up to 100 micrograms. This Heterometrus spinifer (Asia giant forest scorpion) protein is 2.39 kDa venom peptide.